Reading from the N-terminus, the 286-residue chain is Shikimate dehydrogenase (NADP(+)) (286 aa).

Residues 21–23 (TLS) and Thr-68 contribute to the shikimate site. Lys-72 (proton acceptor) is an active-site residue. Asp-84 contacts NADP(+). Residues Asn-93 and Asp-108 each coordinate shikimate. Residues 132–136 (GYGGA) and Leu-226 contribute to the NADP(+) site. Tyr-228 is a binding site for shikimate. Gly-249 is an NADP(+) binding site.

It belongs to the shikimate dehydrogenase family. As to quaternary structure, homodimer.

The enzyme catalyses shikimate + NADP(+) = 3-dehydroshikimate + NADPH + H(+). It functions in the pathway metabolic intermediate biosynthesis; chorismate biosynthesis; chorismate from D-erythrose 4-phosphate and phosphoenolpyruvate: step 4/7. Functionally, involved in the biosynthesis of the chorismate, which leads to the biosynthesis of aromatic amino acids. Catalyzes the reversible NADPH linked reduction of 3-dehydroshikimate (DHSA) to yield shikimate (SA). This is Shikimate dehydrogenase (NADP(+)) from Thermosynechococcus vestitus (strain NIES-2133 / IAM M-273 / BP-1).